Consider the following 115-residue polypeptide: Small ribosomal subunit protein bS6 (115 aa).

This sequence belongs to the bacterial ribosomal protein bS6 family.

Its function is as follows. Binds together with bS18 to 16S ribosomal RNA. The protein is Small ribosomal subunit protein bS6 of Picosynechococcus sp. (strain ATCC 27264 / PCC 7002 / PR-6) (Agmenellum quadruplicatum).